A 281-amino-acid polypeptide reads, in one-letter code: Probable endonuclease 4 (281 aa).

Residues histidine 69, histidine 109, glutamate 145, aspartate 179, histidine 182, histidine 216, aspartate 229, histidine 231, and glutamate 261 each contribute to the Zn(2+) site.

Belongs to the AP endonuclease 2 family. Zn(2+) serves as cofactor.

It carries out the reaction Endonucleolytic cleavage to 5'-phosphooligonucleotide end-products.. Endonuclease IV plays a role in DNA repair. It cleaves phosphodiester bonds at apurinic or apyrimidinic (AP) sites, generating a 3'-hydroxyl group and a 5'-terminal sugar phosphate. This is Probable endonuclease 4 from Yersinia enterocolitica serotype O:8 / biotype 1B (strain NCTC 13174 / 8081).